The sequence spans 158 residues: Large ribosomal subunit protein bL21 (158 aa).

Residues 106-158 (SKPKKAAAKPIKEEATAAKGTKDTAVEKKAEKTAEKKTASQKKAAVASKSKKD) are disordered. Basic and acidic residues predominate over residues 115-143 (PIKEEATAAKGTKDTAVEKKAEKTAEKKT). The segment covering 146–158 (QKKAAVASKSKKD) has biased composition (low complexity).

This sequence belongs to the bacterial ribosomal protein bL21 family. As to quaternary structure, part of the 50S ribosomal subunit. Contacts protein L20.

In terms of biological role, this protein binds to 23S rRNA in the presence of protein L20. The sequence is that of Large ribosomal subunit protein bL21 from Bartonella tribocorum (strain CIP 105476 / IBS 506).